Consider the following 238-residue polypeptide: uncharacterized protein (238 aa).

The protein belongs to the chlamydial CPn_0658/CT_538/TC_0825 family.

This is an uncharacterized protein from Chlamydia muridarum (strain MoPn / Nigg).